The following is a 102-amino-acid chain: UPF0751 protein Dhaf_1351 (102 aa).

It belongs to the UPF0751 family.

This chain is UPF0751 protein Dhaf_1351, found in Desulfitobacterium hafniense (strain DSM 10664 / DCB-2).